Consider the following 228-residue polypeptide: Protein GrpE (228 aa).

Over residues 1 to 22 (MDDKQKTNEEVKASSFDSEKSS) the composition is skewed to basic and acidic residues. The tract at residues 1–71 (MDDKQKTNEE…DQTNTNNNEL (71 aa)) is disordered. Positions 38–53 (QNVQHDNGSNPAQKQN) are enriched in polar residues.

The protein belongs to the GrpE family. In terms of assembly, homodimer.

The protein resides in the cytoplasm. Its function is as follows. Participates actively in the response to hyperosmotic and heat shock by preventing the aggregation of stress-denatured proteins, in association with DnaK and GrpE. It is the nucleotide exchange factor for DnaK and may function as a thermosensor. Unfolded proteins bind initially to DnaJ; upon interaction with the DnaJ-bound protein, DnaK hydrolyzes its bound ATP, resulting in the formation of a stable complex. GrpE releases ADP from DnaK; ATP binding to DnaK triggers the release of the substrate protein, thus completing the reaction cycle. Several rounds of ATP-dependent interactions between DnaJ, DnaK and GrpE are required for fully efficient folding. In Coprothermobacter proteolyticus (strain ATCC 35245 / DSM 5265 / OCM 4 / BT), this protein is Protein GrpE.